The chain runs to 130 residues: Small ribosomal subunit protein uS8 (130 aa).

This sequence belongs to the universal ribosomal protein uS8 family. Part of the 30S ribosomal subunit.

Its function is as follows. One of the primary rRNA binding proteins, it binds directly to 16S rRNA central domain where it helps coordinate assembly of the platform of the 30S subunit. The sequence is that of Small ribosomal subunit protein uS8 from Pyrobaculum arsenaticum (strain DSM 13514 / JCM 11321 / PZ6).